The primary structure comprises 469 residues: MVEFPFEISPMFEGERVRKEGMFVELGGPKSLGLELVRAKPMDEIEDDKVTIVGPDLKEMEEGKTYPWAMIFNIGGELVEPDLESVVERRVHDFINYCQGIMHLNQRYDVWMRVSKDTAAKMDSFEPFGQAVMMLFKTELPFIEKMQVTFYTEQAEVEKQMETAKEIFKARDERTKDLHDEDVDVFYGCTLCQSFAPTNVCVVSPDRVSLCGAINWFDGRAAAKVDPEGPQFEIAKGDLLDANTGEYTGVNDIAKKLSAGEFDKIKLHSFFDSPHTSCGCFEVVGFYIPEVDGIGWVNREYQGMAPNGIGFSTMAGQTGGGKQIVGFLGIGINYFYSPKFIQADGGWNRVVWLPSMLKDKIIDTIPEDLKDKIATENDSTDIESLKAFLQEKGHPVVATWAAEEEEEEEEEEEEEVAVAAAPMMMPAAGFQMPAMPMMSGGSSGGIKLTFKNAKITIDKMIISEKKEKK.

Positions 189, 192, 278, and 280 each coordinate [Ni-Fe-S] cluster.

The protein belongs to the CdhC family. In terms of assembly, monomer. The ACDS complex is made up of alpha, epsilon, beta, gamma and delta chains with a probable stoichiometry of (alpha(2)epsilon(2))(4)-beta(8)-(gamma(1)delta(1))(8) (Potential). [Ni-Fe-S] cluster is required as a cofactor.

It carries out the reaction Co(I)-[corrinoid Fe-S protein] + acetyl-CoA + H(+) = methyl-Co(III)-[corrinoid Fe-S protein] + CO + CoA. It functions in the pathway one-carbon metabolism; methanogenesis from acetate. Part of a complex that catalyzes the reversible cleavage of acetyl-CoA, allowing growth on acetate as sole source of carbon and energy. The alpha-epsilon complex generates CO from CO(2), while the beta subunit (this protein) combines the CO with CoA and a methyl group to form acetyl-CoA. The methyl group, which is incorporated into acetyl-CoA, is transferred to the beta subunit by a corrinoid iron-sulfur protein (the gamma-delta complex). This Methanosarcina acetivorans (strain ATCC 35395 / DSM 2834 / JCM 12185 / C2A) protein is Acetyl-CoA decarbonylase/synthase complex subunit beta 1 (cdhC1).